Consider the following 441-residue polypeptide: Glutamate--tRNA ligase 2 (441 aa).

Positions 9–19 match the 'HIGH' region motif; sequence PSPTGYIHVGN. Positions 239–243 match the 'KMSKS' region motif; sequence ALSKR. K242 serves as a coordination point for ATP.

This sequence belongs to the class-I aminoacyl-tRNA synthetase family. Glutamate--tRNA ligase type 1 subfamily. Monomer.

It localises to the cytoplasm. The catalysed reaction is tRNA(Glu) + L-glutamate + ATP = L-glutamyl-tRNA(Glu) + AMP + diphosphate. Catalyzes the attachment of glutamate to tRNA(Glu) in a two-step reaction: glutamate is first activated by ATP to form Glu-AMP and then transferred to the acceptor end of tRNA(Glu). In Cereibacter sphaeroides (strain ATCC 17023 / DSM 158 / JCM 6121 / CCUG 31486 / LMG 2827 / NBRC 12203 / NCIMB 8253 / ATH 2.4.1.) (Rhodobacter sphaeroides), this protein is Glutamate--tRNA ligase 2.